A 46-amino-acid chain; its full sequence is MSDNPVKEEVQQFDKKCLKKTNTAEKNTLPTKEDIDQEKKAAEGGK.

Over residues 21–30 (TNTAEKNTLP) the composition is skewed to polar residues. Positions 21-46 (TNTAEKNTLPTKEDIDQEKKAAEGGK) are disordered. The span at 31 to 46 (TKEDIDQEKKAAEGGK) shows a compositional bias: basic and acidic residues.

The protein belongs to the thymosin beta family.

It is found in the cytoplasm. The protein resides in the cytoskeleton. Plays an important role in the organization of the cytoskeleton. Binds to and sequesters actin monomers (G actin) and therefore inhibits actin polymerization. The sequence is that of Thymosin beta-a from Cyprinus carpio (Common carp).